A 515-amino-acid chain; its full sequence is Cytosolic Fe-S cluster assembly factor NAR1 homolog (515 aa).

[4Fe-4S] cluster contacts are provided by Cys19, Cys65, Cys68, Cys71, Cys192, Cys247, Cys428, and Cys432.

It belongs to the NARF family.

Its function is as follows. Component of the cytosolic Fe/S protein assembly machinery. Required for maturation of extramitochondrial Fe/S proteins. May play a role in the transfer of pre-assembled Fe/S clusters to target apoproteins. This Schizosaccharomyces japonicus (strain yFS275 / FY16936) (Fission yeast) protein is Cytosolic Fe-S cluster assembly factor NAR1 homolog.